The primary structure comprises 319 residues: Glycine--tRNA ligase alpha subunit (319 aa).

The segment at 290 to 319 is disordered; it reads RQQQPEAPAPGPAAVVGGRDRKDACDVKEG. Over residues 307 to 319 the composition is skewed to basic and acidic residues; that stretch reads GRDRKDACDVKEG.

This sequence belongs to the class-II aminoacyl-tRNA synthetase family. Tetramer of two alpha and two beta subunits.

The protein localises to the cytoplasm. It carries out the reaction tRNA(Gly) + glycine + ATP = glycyl-tRNA(Gly) + AMP + diphosphate. The sequence is that of Glycine--tRNA ligase alpha subunit from Moorella thermoacetica (strain ATCC 39073 / JCM 9320).